A 479-amino-acid chain; its full sequence is Nuclear envelope integral membrane protein 2 (479 aa).

The first 23 residues, 1–23, serve as a signal peptide directing secretion; sequence MEKLAAFILVLTLLCAYWQSAEG. N-linked (GlcNAc...) asparagine glycosylation occurs at Asn69. A run of 5 helical transmembrane segments spans residues 172–192, 203–223, 233–253, 276–296, and 301–321; these read LFFY…FLTL, LFLV…QRVL, HWME…AVCY, IVLL…VAVL, and ILPL…SFLA. The N-linked (GlcNAc...) asparagine glycan is linked to Asn414. Residues 414-479 form a disordered region; it reads NSSSSDTQSH…PLDPEDQDFF (66 aa). The span at 438 to 449 shows a compositional bias: low complexity; it reads NSPPVLNNLPSP. A compositionally biased stretch (pro residues) spans 450 to 470; it reads TIYPPTICPYPPVTYTPQPEP.

This sequence belongs to the NEMP family.

Its subcellular location is the nucleus inner membrane. In terms of biological role, contributes to nuclear envelope stiffness in germ cells. Involved in male and female fertility. The polypeptide is Nuclear envelope integral membrane protein 2 (Danio rerio (Zebrafish)).